Reading from the N-terminus, the 158-residue chain is Protein-export protein SecB (158 aa).

The protein belongs to the SecB family. As to quaternary structure, homotetramer, a dimer of dimers. One homotetramer interacts with 1 SecA dimer.

The protein localises to the cytoplasm. Its function is as follows. One of the proteins required for the normal export of preproteins out of the cell cytoplasm. It is a molecular chaperone that binds to a subset of precursor proteins, maintaining them in a translocation-competent state. It also specifically binds to its receptor SecA. The chain is Protein-export protein SecB from Anaplasma phagocytophilum (strain HZ).